We begin with the raw amino-acid sequence, 309 residues long: Methionyl-tRNA formyltransferase (309 aa).

107–110 (SLLP) serves as a coordination point for (6S)-5,6,7,8-tetrahydrofolate.

Belongs to the Fmt family.

The enzyme catalyses L-methionyl-tRNA(fMet) + (6R)-10-formyltetrahydrofolate = N-formyl-L-methionyl-tRNA(fMet) + (6S)-5,6,7,8-tetrahydrofolate + H(+). Attaches a formyl group to the free amino group of methionyl-tRNA(fMet). The formyl group appears to play a dual role in the initiator identity of N-formylmethionyl-tRNA by promoting its recognition by IF2 and preventing the misappropriation of this tRNA by the elongation apparatus. This chain is Methionyl-tRNA formyltransferase, found in Borrelia recurrentis (strain A1).